Here is a 212-residue protein sequence, read N- to C-terminus: ER lumen protein-retaining receptor 2 (212 aa).

Topologically, residues 1 to 4 (MNVF) are lumenal. A helical membrane pass occupies residues 5-24 (RLSGDLSHLAAIIILLLKIW). The Cytoplasmic portion of the chain corresponds to 25–32 (KSRSCAGI). The chain crosses the membrane as a helical span at residues 33-52 (SGKSQLLFALVFTTRYLDLL). Residues 47–48 (RY) form an interaction with the K-D-E-L motif on target proteins region. At 53–58 (TSFISL) the chain is on the lumenal side. Residues 59 to 79 (YNTSMKVIYIGCAYATVYLIY) traverse the membrane as a helical segment. Over 80–92 (MKFKATYDGNHDT) the chain is Cytoplasmic. A helical transmembrane segment spans residues 93 to 110 (FRVEFLVVPVGGLSVLVN). Residues 111–116 (HDFSPL) lie on the Lumenal side of the membrane. Residues 117 to 135 (EILWTFSIYLESVAILPQL) traverse the membrane as a helical segment. The Cytoplasmic segment spans residues 136 to 149 (FMISKTGEAETITT). A helical membrane pass occupies residues 150–168 (HYLFFLGLYRALYLFNWIW). The segment at 159–169 (RALYLFNWIWR) is interaction with the K-D-E-L motif on target proteins. Over 169–178 (RYSFEGFFDL) the chain is Lumenal. A helical membrane pass occupies residues 179–199 (IAIVAGVVQTILYCDFFYLYV). Topologically, residues 200–212 (TKVLKGKKLSLPA) are cytoplasmic. Residues 204 to 207 (KGKK) form an important for recycling of cargo proteins with the sequence motif K-D-E-L from the Golgi to the endoplasmic reticulum region.

This sequence belongs to the ERD2 family.

Its subcellular location is the endoplasmic reticulum membrane. The protein resides in the golgi apparatus membrane. It localises to the cytoplasmic vesicle. The protein localises to the COPI-coated vesicle membrane. Functionally, receptor for the C-terminal sequence motif K-D-E-L that is present on endoplasmic reticulum resident proteins and that mediates their recycling from the Golgi back to the endoplasmic reticulum. Binding is pH dependent, and is optimal at pH 5-5.4. This Xenopus tropicalis (Western clawed frog) protein is ER lumen protein-retaining receptor 2 (kdelr2).